The chain runs to 122 residues: uncharacterized protein (122 aa).

It is found in the mitochondrion. This is an uncharacterized protein from Arabidopsis thaliana (Mouse-ear cress).